The following is a 149-amino-acid chain: Small ribosomal subunit protein uS15 (149 aa).

Residues 1–11 are compositionally biased toward basic and acidic residues; that stretch reads MARMHSRDRGK. Residues 1-25 form a disordered region; the sequence is MARMHSRDRGKSGSTRPPRVAPPSW.

This sequence belongs to the universal ribosomal protein uS15 family. Part of the 30S ribosomal subunit.

The sequence is that of Small ribosomal subunit protein uS15 from Methanopyrus kandleri (strain AV19 / DSM 6324 / JCM 9639 / NBRC 100938).